A 143-amino-acid polypeptide reads, in one-letter code: Flagellar assembly factor FliW (143 aa).

The protein belongs to the FliW family. Interacts with translational regulator CsrA and flagellin(s).

It localises to the cytoplasm. Acts as an anti-CsrA protein, binds CsrA and prevents it from repressing translation of its target genes, one of which is flagellin. Binds to flagellin and participates in the assembly of the flagellum. This chain is Flagellar assembly factor FliW, found in Bacillus velezensis (strain DSM 23117 / BGSC 10A6 / LMG 26770 / FZB42) (Bacillus amyloliquefaciens subsp. plantarum).